We begin with the raw amino-acid sequence, 71 residues long: Conotoxin TxMMSK-05 (71 aa).

Positions 1–20 (MMSKLGALLIICLLLFPLTA) are cleaved as a signal peptide. Residues 21 to 52 (VPLDGDQHADRPAERLQDDISSKHHPMFDAVR) constitute a propeptide that is removed on maturation. 3 cysteine pairs are disulfide-bonded: C54–C70, C55–C66, and C60–C69.

It belongs to the conotoxin M superfamily. As to expression, expressed by the venom duct.

It localises to the secreted. The sequence is that of Conotoxin TxMMSK-05 from Conus textile (Cloth-of-gold cone).